Consider the following 435-residue polypeptide: D-amino acid dehydrogenase (435 aa).

3–17 (VLILGSGVIGTTSAW) provides a ligand contact to FAD.

This sequence belongs to the DadA oxidoreductase family. It depends on FAD as a cofactor.

It carries out the reaction a D-alpha-amino acid + A + H2O = a 2-oxocarboxylate + AH2 + NH4(+). It functions in the pathway amino-acid degradation; D-alanine degradation; NH(3) and pyruvate from D-alanine: step 1/1. Functionally, oxidative deamination of D-amino acids. The sequence is that of D-amino acid dehydrogenase from Xylella fastidiosa (strain 9a5c).